The following is a 272-amino-acid chain: Inositol monophosphatase (272 aa).

4 residues coordinate Mg(2+): Glu-71, Asp-90, Ile-92, and Asp-93. Glu-71 contributes to the substrate binding site. Substrate-binding positions include Ile-92–Thr-95, Gly-194–Ala-196, Glu-213, and Asp-220. Asp-220 serves as a coordination point for Mg(2+).

Belongs to the inositol monophosphatase superfamily. The cofactor is Mg(2+).

It localises to the cytoplasm. It carries out the reaction a myo-inositol phosphate + H2O = myo-inositol + phosphate. The catalysed reaction is alpha-D-galactose 1-phosphate + H2O = D-galactose + phosphate. It functions in the pathway polyol metabolism; myo-inositol biosynthesis; myo-inositol from D-glucose 6-phosphate: step 2/2. Inhibited by Li(+), Ca(2+) and Mn(2+), but also by Mg(2+) at concentrations above 3 mM. Responsible for the provision of inositol required for synthesis of phosphatidylinositol and polyphosphoinositides. Has broad substrate specificity and can use myo-inositol monophosphates, myo-inositol 1,3-diphosphate, myo-inositol 1,4-diphosphate, scyllo-inositol-phosphate, D-galactose 1-phosphate, glucose-1-phosphate, glucose-6-phosphate, fructose-1-phosphate, beta-glycerophosphate, and 2'-AMP as substrates. The chain is Inositol monophosphatase (impa1) from Dictyostelium discoideum (Social amoeba).